The primary structure comprises 72 residues: Large ribosomal subunit protein uL29 (72 aa).

This sequence belongs to the universal ribosomal protein uL29 family.

In Prochlorococcus marinus (strain AS9601), this protein is Large ribosomal subunit protein uL29.